The chain runs to 29 residues: LKVPDLPLPESYKKALELAKDDLAREIXI.

In terms of tissue distribution, expressed by the venom gland.

It localises to the secreted. In Scolopendra viridicornis nigra (Brazilian giant centipede), this protein is Scolopendra 8011.73 Da toxin.